A 435-amino-acid chain; its full sequence is Arginine biosynthesis bifunctional protein ArgJ, mitochondrial (435 aa).

Substrate-binding residues include Thr179, Lys205, Thr216, Glu302, Asn430, and Ser435. Thr216 serves as the catalytic Nucleophile.

It belongs to the ArgJ family. As to quaternary structure, heterodimer of an alpha and a beta chain. Post-translationally, the alpha and beta chains are autoproteolytically processed from a single precursor protein within the mitochondrion.

It is found in the mitochondrion matrix. The catalysed reaction is N(2)-acetyl-L-ornithine + L-glutamate = N-acetyl-L-glutamate + L-ornithine. It carries out the reaction L-glutamate + acetyl-CoA = N-acetyl-L-glutamate + CoA + H(+). It participates in amino-acid biosynthesis; L-arginine biosynthesis; L-ornithine and N-acetyl-L-glutamate from L-glutamate and N(2)-acetyl-L-ornithine (cyclic): step 1/1. The protein operates within amino-acid biosynthesis; L-arginine biosynthesis; N(2)-acetyl-L-ornithine from L-glutamate: step 1/4. In terms of biological role, catalyzes two activities which are involved in the cyclic version of arginine biosynthesis: the synthesis of acetylglutamate from glutamate and acetyl-CoA, and of ornithine by transacetylation between acetylornithine and glutamate. The chain is Arginine biosynthesis bifunctional protein ArgJ, mitochondrial from Schizosaccharomyces japonicus (strain yFS275 / FY16936) (Fission yeast).